A 537-amino-acid polypeptide reads, in one-letter code: CTP synthase (537 aa).

The amidoligase domain stretch occupies residues 1-268 (MSFKCIFLTG…STFITEKLGL (268 aa)). Serine 14 contributes to the CTP binding site. Serine 14 is a UTP binding site. Residue 15–20 (SLGKGL) participates in ATP binding. L-glutamine is bound at residue tyrosine 55. Aspartate 72 lines the ATP pocket. Mg(2+)-binding residues include aspartate 72 and glutamate 142. CTP-binding positions include 149–151 (DIE), 188–193 (KTKPTQ), and lysine 224. UTP is bound by residues 188-193 (KTKPTQ) and lysine 224. One can recognise a Glutamine amidotransferase type-1 domain in the interval 294-533 (RLGLVGKYVQ…IEAALLHSRN (240 aa)). Residue glycine 353 coordinates L-glutamine. The active-site Nucleophile; for glutamine hydrolysis is the cysteine 380. L-glutamine is bound by residues 381–384 (LGMQ), glutamate 404, and arginine 461. Active-site residues include histidine 506 and glutamate 508.

This sequence belongs to the CTP synthase family. In terms of assembly, homotetramer.

It catalyses the reaction UTP + L-glutamine + ATP + H2O = CTP + L-glutamate + ADP + phosphate + 2 H(+). The enzyme catalyses L-glutamine + H2O = L-glutamate + NH4(+). The catalysed reaction is UTP + NH4(+) + ATP = CTP + ADP + phosphate + 2 H(+). The protein operates within pyrimidine metabolism; CTP biosynthesis via de novo pathway; CTP from UDP: step 2/2. With respect to regulation, allosterically activated by GTP, when glutamine is the substrate; GTP has no effect on the reaction when ammonia is the substrate. The allosteric effector GTP functions by stabilizing the protein conformation that binds the tetrahedral intermediate(s) formed during glutamine hydrolysis. Inhibited by the product CTP, via allosteric rather than competitive inhibition. Functionally, catalyzes the ATP-dependent amination of UTP to CTP with either L-glutamine or ammonia as the source of nitrogen. Regulates intracellular CTP levels through interactions with the four ribonucleotide triphosphates. This is CTP synthase from Chlamydia abortus (strain DSM 27085 / S26/3) (Chlamydophila abortus).